A 773-amino-acid polypeptide reads, in one-letter code: DNA gyrase subunit B (773 aa).

The 115-residue stretch at 416–530 folds into the Toprim domain; that stretch reads SEIFLVEGDS…QGHVYIAQAP (115 aa). 3 residues coordinate Mg(2+): Glu-422, Asp-495, and Asp-497.

The protein belongs to the type II topoisomerase GyrB family. Heterotetramer, composed of two GyrA and two GyrB chains. In the heterotetramer, GyrA contains the active site tyrosine that forms a transient covalent intermediate with DNA, while GyrB binds cofactors and catalyzes ATP hydrolysis. Mg(2+) is required as a cofactor. Mn(2+) serves as cofactor. The cofactor is Ca(2+).

Its subcellular location is the cytoplasm. It catalyses the reaction ATP-dependent breakage, passage and rejoining of double-stranded DNA.. Functionally, a type II topoisomerase that negatively supercoils closed circular double-stranded (ds) DNA in an ATP-dependent manner to modulate DNA topology and maintain chromosomes in an underwound state. Negative supercoiling favors strand separation, and DNA replication, transcription, recombination and repair, all of which involve strand separation. Also able to catalyze the interconversion of other topological isomers of dsDNA rings, including catenanes and knotted rings. Type II topoisomerases break and join 2 DNA strands simultaneously in an ATP-dependent manner. This chain is DNA gyrase subunit B, found in Helicobacter pylori (strain ATCC 700392 / 26695) (Campylobacter pylori).